The primary structure comprises 484 residues: Sodium-dependent glucose transporter 1 (484 aa).

Ser6 carries the phosphoserine modification. Helical transmembrane passes span 40 to 60 (WFTTVVLNAAFLGMGVSAAVL), 80 to 100 (EIFVGRALGYLGGSVVGGVLF), 106 to 126 (FLLLGLSHLLTAAGLYLTPFC), 135 to 155 (MMSITGVSFGVLDTGGNVLIL), 168 to 188 (ALHFSFALGAFLAPLLAKLAW), 227 to 247 (LLWAYASIGTYVLVLSVFLFA), 274 to 294 (ALLCLLFLFFFFYVGAEVTYG), 317 to 337 (SIFWGTFAACRGLAIFFATLL), 340 to 360 (GTMMVLCNIGSLASSFFLVLF), 366 to 386 (CLWIASSVYGASMAATFPSGI), 401 to 421 (AFILVGAALGLMATPALSGIL), and 428 to 448 (LPVILYMCLGSAVLTTVLFPV).

The protein belongs to the major facilitator superfamily. As to expression, expressed in brain, liver, lung, and kidney. In kidney expressed in cortex and inner medulla, in ascending thin limbs (ATLs) and lower descending thin limbs (DTLs). Primarily expressed in the proximal tubules of the kidney.

It localises to the apical cell membrane. Functionally, may function as a sodium-dependent glucose transporter. Potential channels for urea in the inner medulla of kidney. This chain is Sodium-dependent glucose transporter 1, found in Rattus norvegicus (Rat).